The following is a 204-amino-acid chain: Thiamine-phosphate synthase (204 aa).

4-amino-2-methyl-5-(diphosphooxymethyl)pyrimidine-binding positions include 32-36 (QLRMK) and aspartate 64. Residues aspartate 65 and aspartate 84 each coordinate Mg(2+). Threonine 103 is a binding site for 4-amino-2-methyl-5-(diphosphooxymethyl)pyrimidine. 129 to 131 (TTT) is a binding site for 2-[(2R,5Z)-2-carboxy-4-methylthiazol-5(2H)-ylidene]ethyl phosphate. Residue lysine 132 participates in 4-amino-2-methyl-5-(diphosphooxymethyl)pyrimidine binding. Glycine 165 contributes to the 2-[(2R,5Z)-2-carboxy-4-methylthiazol-5(2H)-ylidene]ethyl phosphate binding site.

It belongs to the thiamine-phosphate synthase family. Requires Mg(2+) as cofactor.

The enzyme catalyses 2-[(2R,5Z)-2-carboxy-4-methylthiazol-5(2H)-ylidene]ethyl phosphate + 4-amino-2-methyl-5-(diphosphooxymethyl)pyrimidine + 2 H(+) = thiamine phosphate + CO2 + diphosphate. It carries out the reaction 2-(2-carboxy-4-methylthiazol-5-yl)ethyl phosphate + 4-amino-2-methyl-5-(diphosphooxymethyl)pyrimidine + 2 H(+) = thiamine phosphate + CO2 + diphosphate. It catalyses the reaction 4-methyl-5-(2-phosphooxyethyl)-thiazole + 4-amino-2-methyl-5-(diphosphooxymethyl)pyrimidine + H(+) = thiamine phosphate + diphosphate. It participates in cofactor biosynthesis; thiamine diphosphate biosynthesis; thiamine phosphate from 4-amino-2-methyl-5-diphosphomethylpyrimidine and 4-methyl-5-(2-phosphoethyl)-thiazole: step 1/1. Its function is as follows. Condenses 4-methyl-5-(beta-hydroxyethyl)thiazole monophosphate (THZ-P) and 2-methyl-4-amino-5-hydroxymethyl pyrimidine pyrophosphate (HMP-PP) to form thiamine monophosphate (TMP). In Bacteroides fragilis (strain YCH46), this protein is Thiamine-phosphate synthase.